Reading from the N-terminus, the 116-residue chain is Aspartate 1-decarboxylase (116 aa).

Serine 25 acts as the Schiff-base intermediate with substrate; via pyruvic acid in catalysis. Serine 25 carries the pyruvic acid (Ser) modification. Substrate is bound at residue threonine 57. Catalysis depends on tyrosine 58, which acts as the Proton donor. 73–75 lines the substrate pocket; it reads GAA.

It belongs to the PanD family. In terms of assembly, heterooctamer of four alpha and four beta subunits. It depends on pyruvate as a cofactor. Is synthesized initially as an inactive proenzyme, which is activated by self-cleavage at a specific serine bond to produce a beta-subunit with a hydroxyl group at its C-terminus and an alpha-subunit with a pyruvoyl group at its N-terminus.

It localises to the cytoplasm. The catalysed reaction is L-aspartate + H(+) = beta-alanine + CO2. Its pathway is cofactor biosynthesis; (R)-pantothenate biosynthesis; beta-alanine from L-aspartate: step 1/1. Functionally, catalyzes the pyruvoyl-dependent decarboxylation of aspartate to produce beta-alanine. This chain is Aspartate 1-decarboxylase, found in Syntrophus aciditrophicus (strain SB).